The primary structure comprises 362 residues: Tryptophan 2,3-dioxygenase (362 aa).

Substrate contacts are provided by residues 40-44 (FIIVH) and Arg-111. His-297 serves as a coordination point for heme. Thr-311 lines the substrate pocket.

This sequence belongs to the tryptophan 2,3-dioxygenase family. As to quaternary structure, homotetramer. The cofactor is heme.

The catalysed reaction is L-tryptophan + O2 = N-formyl-L-kynurenine. It participates in amino-acid degradation; L-tryptophan degradation via kynurenine pathway; L-kynurenine from L-tryptophan: step 1/2. Functionally, heme-dependent dioxygenase that catalyzes the oxidative cleavage of the L-tryptophan (L-Trp) pyrrole ring and converts L-tryptophan to N-formyl-L-kynurenine. Catalyzes the oxidative cleavage of the indole moiety. The protein is Tryptophan 2,3-dioxygenase of Alteromonas mediterranea (strain DSM 17117 / CIP 110805 / LMG 28347 / Deep ecotype).